The following is a 381-amino-acid chain: Succinyl-diaminopimelate desuccinylase (381 aa).

H71 provides a ligand contact to Zn(2+). The active site involves D73. D104 contacts Zn(2+). The Proton acceptor role is filled by E136. The Zn(2+) site is built by E137, E166, and H351.

The protein belongs to the peptidase M20A family. DapE subfamily. As to quaternary structure, homodimer. It depends on Zn(2+) as a cofactor. Requires Co(2+) as cofactor.

It catalyses the reaction N-succinyl-(2S,6S)-2,6-diaminopimelate + H2O = (2S,6S)-2,6-diaminopimelate + succinate. It participates in amino-acid biosynthesis; L-lysine biosynthesis via DAP pathway; LL-2,6-diaminopimelate from (S)-tetrahydrodipicolinate (succinylase route): step 3/3. Its function is as follows. Catalyzes the hydrolysis of N-succinyl-L,L-diaminopimelic acid (SDAP), forming succinate and LL-2,6-diaminopimelate (DAP), an intermediate involved in the bacterial biosynthesis of lysine and meso-diaminopimelic acid, an essential component of bacterial cell walls. This is Succinyl-diaminopimelate desuccinylase from Ehrlichia chaffeensis (strain ATCC CRL-10679 / Arkansas).